A 477-amino-acid chain; its full sequence is 3-succinoylsemialdehyde-pyridine dehydrogenase (477 aa).

202 to 208 serves as a coordination point for NAD(+); sequence GDGPGVG. Active-site residues include E246 and C280.

This sequence belongs to the aldehyde dehydrogenase family.

The catalysed reaction is 4-oxo-4-(pyridin-3-yl)butanal + NADP(+) + H2O = 4-oxo-4-(pyridin-3-yl)butanoate + NADPH + 2 H(+). It functions in the pathway alkaloid degradation; nicotine degradation. Its function is as follows. Catalyzes the dehydrogenation of 3-succinoylsemialdehyde-pyridine to 3-succinoyl-pyridine in the nicotine degradation pathway. This chain is 3-succinoylsemialdehyde-pyridine dehydrogenase (ald), found in Pseudomonas sp.